A 424-amino-acid chain; its full sequence is Tyrosine--tRNA ligase (424 aa).

L-tyrosine is bound at residue tyrosine 37. The 'HIGH' region signature appears at 42-51 (PTADSLHLGH). An N6-acetyllysine modification is found at lysine 144. 2 residues coordinate L-tyrosine: tyrosine 175 and glutamine 179. The 'KMSKS' region signature appears at 235–239 (KFGKT). Lysine 238 serves as a coordination point for ATP. The S4 RNA-binding domain maps to 357 to 414 (ADLMQALVDSELQPSRGQARKTIASNAITINGEKQSDPEYFFKEEDRLFGRFTLLRRG).

Belongs to the class-I aminoacyl-tRNA synthetase family. TyrS type 1 subfamily. As to quaternary structure, homodimer.

Its subcellular location is the cytoplasm. It catalyses the reaction tRNA(Tyr) + L-tyrosine + ATP = L-tyrosyl-tRNA(Tyr) + AMP + diphosphate + H(+). Its function is as follows. Catalyzes the attachment of tyrosine to tRNA(Tyr) in a two-step reaction: tyrosine is first activated by ATP to form Tyr-AMP and then transferred to the acceptor end of tRNA(Tyr). This is Tyrosine--tRNA ligase from Escherichia coli (strain K12 / DH10B).